The following is a 994-amino-acid chain: MGACISKNSSARVSRSSALSASKQTVAASAPPGAAGDETSATGAAEEASRNSLARVDGTRASAAELERAPDGVCPDREEPGTANAEQGGVTEKKDTRETLAGMNSPKTLEAEAQEDDPKREAPNQDVPSEAPEGPKEKPGGDRKPAQKAILKQDDSHTEEEKLNAHLAYREKTPADFALIQDSLKANLVCSSLNEGEIDALAVAMQFFTFKKGDVVTKQGEPGSYFFIIHSGTFDVLVNDKRVNAMDKGKAFGEIALIHNTERSATVVASSTEGALWGVQRHTFRETLKQLSSRNFAENRQFLASVKFFEMLTEAQKNVITNALVVENFKPGQPIVKEGDAGDVLYILKSGKAKVSIGGREIRMLRKGDYFGERALLYKEPRSATITAEEFTVCVSIGRELLDRVLGNLQHVLFRNIMVEALQQSKVYELFQGDQLSKLIEAAVVKDYGADYVILDKENKTKGIRFFFVLEGELSVYAYTQNPATKEEERKLAATLKRGQAFGEEYVLNPTRPFNHYVKSVGPCKLALFTSSVLTATLGGEDIDETLDFNNKRAIIRKMYIFRYLSDHQMTMLIKAFKTVRYMSGEYIIKEGERGTRFFIIKAGEVAILKNNKRLRTLGRHDYFGERALLYDKPRTASVCANSAGVDLWVVDKSVFNEIIKGPMLAHLEERIRMQDTKVEFQDLQVVRVVGRGTFGTVKLVRHVPTDIRYALKCVSRRSVIALSQQQHIRLEREIMAENDHPFIIRLVRTFRDKEFLYFLTELVTGGELYDAIRKLGLLARSQAQFYLASIVLAIEYLHERNIAYRDLKPENILLDSQGYVKLIDFGCAKKMQGRAYTLVGTPHYMAPEVILGKGYTLTADTWAFGVCLYEFMCGPLPFGNDAEDQLEIFRDILTGKLVFPHYVTDQDAINLMKRLLCRLPEVRIGCSINGYKDIKEHAFFGDFDWDKLAGRGLPPPLAPKGETYAEDTEQSSFELDEDDTIVLEDEYDWDKDF.

Positions 1 to 162 are disordered; sequence MGACISKNSS…QDDSHTEEEK (162 aa). Gly2 is lipidated: N-myristoyl glycine. A lipid anchor (S-palmitoyl cysteine) is attached at Cys4. 2 stretches are compositionally biased toward low complexity: residues 9-22 and 33-46; these read SSAR…LSAS and GAAG…GAAE. Basic and acidic residues-rich tracts occupy residues 65-80 and 133-162; these read ELER…REEP and EGPK…EEEK. CNMP-binding domain stretches follow at residues 189–305, 308–407, 463–539, and 561–660; these read VCSS…FLAS, FFEM…RVLG, GIRF…ATLG, and IFRY…NEII. Gly253, Glu254, Ala256, Arg263, and Ser264 together coordinate 3',5'-cyclic GMP. 6 residues coordinate 3',5'-cyclic GMP: Arg616, Gly625, Glu626, Ala628, Arg635, and Thr636. A Protein kinase domain is found at 684–941; that stretch reads LQVVRVVGRG…YKDIKEHAFF (258 aa). Residues 690-698 and Lys713 contribute to the ATP site; that span reads VGRGTFGTV. Asp807 (proton acceptor) is an active-site residue. Residues 942–994 enclose the AGC-kinase C-terminal domain; the sequence is GDFDWDKLAGRGLPPPLAPKGETYAEDTEQSSFELDEDDTIVLEDEYDWDKDF. Positions 954–976 are disordered; the sequence is LPPPLAPKGETYAEDTEQSSFEL. The span at 965–976 shows a compositional bias: acidic residues; sequence YAEDTEQSSFEL.

The protein belongs to the protein kinase superfamily. AGC Ser/Thr protein kinase family. cGMP subfamily. Mg(2+) serves as cofactor.

Its subcellular location is the cytoplasm. The protein localises to the membrane. It is found in the cell membrane. It catalyses the reaction L-seryl-[protein] + ATP = O-phospho-L-seryl-[protein] + ADP + H(+). The enzyme catalyses L-threonyl-[protein] + ATP = O-phospho-L-threonyl-[protein] + ADP + H(+). Activated by cGMP. The cGMP-binding domains acts cooperatively to activate PKG. Inhibited by the antiparasitic small molecule 4-[2-(4-fluorophenyl)-5-(1-methylpiperidine-4-yl)-1Hpyrrol- 3-yl]pyridine (compound 1). Serine/threonine protein kinase which acts as a downstream effector of the second messenger cGMP. Plays an essential role in tachyzoite invasion of and egress from host cells. During invasion of host cells, regulates the apico-basal flux of F-actin probably via Ca(2+)-mediated activation of CDPK1. In tachyzoites, required for microneme secretion. Required for tachyzoite gliding motility. Functionally, plays an essential role in parasite invasion of and egress from host cells, and microneme secretion. Its function is as follows. Dispensable for parasite invasion of and egress from host cells, and microneme secretion. This chain is cGMP-dependent protein kinase, found in Toxoplasma gondii.